The following is a 940-amino-acid chain: MAFNKLESSNNQEIISEEVGILKELLDDATRGMAGEQGLTTIQHLVELYDEGDYEALTQAISEMTNDDMVFASRYFSLLPLLINISEDVDLAYEVNRKNNIDESYLGKLSETFDVVAESDNARDILENVNVVPVLTAHPTQVQRKTMLELTNHIHELLRKHRDVKDGLINKDKWYADLRRYVEIMMKTDIIREKKLKVKNEITNVMEYYNSSLIKAITKLSHEFKRLAVEKGIELDNPTPITMGMWIGGDRDGNPFVTAETLKLSATLQSEVILNYYIEKVDNLYRSFSLSSRLTEVSETVAEMAKLSPDTSVYRENEPYRRAFSYIQSKLIQTLLFFKAGNFSNERAAKRLSENVRLGSVSTGEVVADFVHDRLSQSLQAVSQQTTEFYETAEAFHDDLLAIKNSLLENDDSVLISGDFEELLQAVEVFGFYLATIDMRQDSSVHEACVAELLKSANIVDNYSELTEVEKVAVLLKELQEDPRTLSSTNVSKSETLEKELAIFRTARLLKDYLGEEVIKQHIISHTESVSDMFELAILLKEVGLVDTERARVQIVPLFETIEDLENSNEIMKQYLGYDIVKRWIKNSNNYQEIMLGYSDSNKDGGYLSSGWTLYKAQNELTNIGEERGIKITFFHGRGGTVGRGGGPSYDAITSQPFGTIKDRIRLTEQGEVIGNKYGNKDAAYYNLEMLVSATLDRMVTRQITDPDELVDFREIMDSIVQDSNRIYRDLVFGNEHFYDYFFEASPIKEVSSLNIGSRPAARKTITDISGLRAIPWVFSWSQNRIMLPGWYGVGSAFNHYIEAEEGNLEKLQHMFETWPFFRSLLSNVDMVLSKSDMNIAFHYAQLAESEEVRSVFNIILDEWQLTKNVILAIEKHDDFLEESPSLKASLGFRLPYFNVLNYIQIELIKRLRNNNLTDDEISLIHITINGIATGLRNSG.

Residues histidine 138 and lysine 603 contribute to the active site.

Belongs to the PEPCase type 1 family. The cofactor is Mg(2+).

The catalysed reaction is oxaloacetate + phosphate = phosphoenolpyruvate + hydrogencarbonate. Functionally, forms oxaloacetate, a four-carbon dicarboxylic acid source for the tricarboxylic acid cycle. This chain is Phosphoenolpyruvate carboxylase, found in Streptococcus thermophilus (strain CNRZ 1066).